The chain runs to 129 residues: Photosystem II reaction center Psb28 protein (129 aa).

The disordered stretch occupies residues 110–129; the sequence is GLGYSNNSGNNEGADEASEG.

This sequence belongs to the Psb28 family. As to quaternary structure, part of the photosystem II complex.

The protein localises to the cellular thylakoid membrane. This is Photosystem II reaction center Psb28 protein from Synechococcus sp. (strain WH7803).